The primary structure comprises 727 residues: Glycerol-3-phosphate dehydrogenase, mitochondrial (727 aa).

A mitochondrion-targeting transit peptide spans 1–42 (MAFQKAVKGTILVGGGALATVLGLSPFAHYRRKQVSLAYVEA). An FAD-binding site is contributed by 71-99 (DILVIGGGATGCGCALDAVTRGLKTALVE). Residue tyrosine 601 is modified to Phosphotyrosine. EF-hand domains lie at 623 to 658 (SDID…INVQ) and 659 to 694 (MDEN…VQKG). Residues aspartate 672, asparagine 674, asparagine 676, glutamine 678, and glutamate 683 each contribute to the Ca(2+) site.

It belongs to the FAD-dependent glycerol-3-phosphate dehydrogenase family. The cofactor is FAD.

The protein resides in the mitochondrion inner membrane. It carries out the reaction a quinone + sn-glycerol 3-phosphate = dihydroxyacetone phosphate + a quinol. It functions in the pathway polyol metabolism; glycerol degradation via glycerol kinase pathway; glycerone phosphate from sn-glycerol 3-phosphate (anaerobic route): step 1/1. Calcium-binding enhance the activity of the enzyme. Its function is as follows. Calcium-responsive mitochondrial glycerol-3-phosphate dehydrogenase which seems to be a key component of the pancreatic beta-cell glucose-sensing device. The protein is Glycerol-3-phosphate dehydrogenase, mitochondrial of Mus musculus (Mouse).